We begin with the raw amino-acid sequence, 237 residues long: Ribosomal RNA small subunit methyltransferase G (237 aa).

S-adenosyl-L-methionine contacts are provided by residues G78, F83, A129–E130, and R148.

The protein belongs to the methyltransferase superfamily. RNA methyltransferase RsmG family.

It localises to the cytoplasm. Its function is as follows. Specifically methylates the N7 position of a guanine in 16S rRNA. The chain is Ribosomal RNA small subunit methyltransferase G from Streptococcus pyogenes serotype M49 (strain NZ131).